Here is a 175-residue protein sequence, read N- to C-terminus: RNA pyrophosphohydrolase (175 aa).

Positions 8 to 159 constitute a Nudix hydrolase domain; sequence PYRTCVGMML…KRPVYERVVK (152 aa). The short motif at 47-68 is the Nudix box element; it reads GGVDPGEDPWTAAKRELYEETS.

It belongs to the Nudix hydrolase family. RppH subfamily. It depends on a divalent metal cation as a cofactor.

Functionally, accelerates the degradation of transcripts by removing pyrophosphate from the 5'-end of triphosphorylated RNA, leading to a more labile monophosphorylated state that can stimulate subsequent ribonuclease cleavage. This is RNA pyrophosphohydrolase from Rhodopseudomonas palustris (strain BisB18).